The primary structure comprises 725 residues: Phosphatase and actin regulator 4A (725 aa).

The segment covering M1 to P12 has biased composition (polar residues). The interval M1–W597 is disordered. The span at K55–T64 shows a compositional bias: basic residues. Composition is skewed to basic and acidic residues over residues S65–P100, G124–K147, and K155–T164. Residues L75 to P100 form an RPEL 1 repeat. Residues M166–Q177 show a composition bias toward polar residues. Low complexity predominate over residues V212–P221. Residues A222 to R235 are compositionally biased toward pro residues. 2 stretches are compositionally biased toward low complexity: residues P265–H276 and P292–Q313. Residues T359–D368 are compositionally biased toward polar residues. Over residues P374–V384 the composition is skewed to pro residues. Over residues P385–D401 the composition is skewed to low complexity. The segment covering P402–P417 has biased composition (pro residues). Positions Q497–V510 are enriched in basic and acidic residues. Acidic residues-rich tracts occupy residues A522–S536 and D545–D554. Over residues K567–E585 the composition is skewed to basic and acidic residues. 2 RPEL repeats span residues T606–N631 and R644–E669.

The protein belongs to the phosphatase and actin regulator family. Binds ppp1ca and actin.

It localises to the cytoplasm. The protein resides in the cell projection. It is found in the lamellipodium. Functionally, regulator of protein phosphatase 1 (PP1) required for neural tube and optic fissure closure, and enteric neural crest cell (ENCCs) migration during development. Acts as an activator of PP1. During neural tube closure, localizes to the ventral neural tube and activates PP1, leading to down-regulate cell proliferation within cranial neural tissue and the neural retina. Also acts as a regulator of migration of enteric neural crest cells (ENCCs) by activating PP1, leading to repression of the integrin signaling through the rho/rock pathway. The polypeptide is Phosphatase and actin regulator 4A (phactr4a) (Danio rerio (Zebrafish)).